The chain runs to 683 residues: uncharacterized protein (683 aa).

Coiled coils occupy residues 62–124 (PEHY…RKER), 155–259 (TTTN…KLSQ), and 346–376 (KKSL…DGDV). A disordered region spans residues 213–237 (QDQVESQTGPKKRRKSPIENQPTAG).

This is an uncharacterized protein from Invertebrate iridescent virus 3 (IIV-3).